A 228-amino-acid chain; its full sequence is L-ribulose-5-phosphate 4-epimerase UlaF (228 aa).

Substrate is bound by residues 26-27 (GN), 43-44 (SG), and 72-73 (SS). 3 residues coordinate Zn(2+): D74, H93, and H95. D118 serves as the catalytic Proton donor/acceptor. H167 provides a ligand contact to Zn(2+). The active-site Proton donor/acceptor is the Y225.

It belongs to the aldolase class II family. AraD/FucA subfamily. Requires Zn(2+) as cofactor.

The enzyme catalyses L-ribulose 5-phosphate = D-xylulose 5-phosphate. The protein operates within cofactor degradation; L-ascorbate degradation; D-xylulose 5-phosphate from L-ascorbate: step 4/4. Catalyzes the isomerization of L-ribulose 5-phosphate to D-xylulose 5-phosphate. Is involved in the anaerobic L-ascorbate utilization. The sequence is that of L-ribulose-5-phosphate 4-epimerase UlaF from Shigella boydii serotype 18 (strain CDC 3083-94 / BS512).